The sequence spans 226 residues: Urease accessory protein UreF (226 aa).

Belongs to the UreF family. As to quaternary structure, ureD, UreF and UreG form a complex that acts as a GTP-hydrolysis-dependent molecular chaperone, activating the urease apoprotein by helping to assemble the nickel containing metallocenter of UreC. The UreE protein probably delivers the nickel.

It is found in the cytoplasm. Required for maturation of urease via the functional incorporation of the urease nickel metallocenter. The protein is Urease accessory protein UreF of Burkholderia mallei (strain NCTC 10247).